The primary structure comprises 27 residues: Ferric reductase B (27 aa).

As to quaternary structure, homodimer. FAD is required as a cofactor.

The enzyme catalyses 2 a Fe(II)-siderophore + NAD(+) + H(+) = 2 a Fe(III)-siderophore + NADH. In terms of biological role, reductase activity that acts on Fe(3+)-chelates and uses both NADH and NADPH as electron donors. May play a role in iron uptake. In Paracoccus denitrificans, this protein is Ferric reductase B (ferB).